The primary structure comprises 1368 residues: DNA-directed RNA polymerase subunit beta (1368 aa).

This sequence belongs to the RNA polymerase beta chain family. In terms of assembly, the RNAP catalytic core consists of 2 alpha, 1 beta, 1 beta' and 1 omega subunit. When a sigma factor is associated with the core the holoenzyme is formed, which can initiate transcription.

The enzyme catalyses RNA(n) + a ribonucleoside 5'-triphosphate = RNA(n+1) + diphosphate. In terms of biological role, DNA-dependent RNA polymerase catalyzes the transcription of DNA into RNA using the four ribonucleoside triphosphates as substrates. This is DNA-directed RNA polymerase subunit beta from Legionella pneumophila (strain Paris).